The sequence spans 83 residues: Large ribosomal subunit protein bL27c (83 aa).

The segment at 1 to 24 (MAHKKGAGSTKNGRDSNAKRLGVK) is disordered.

It belongs to the bacterial ribosomal protein bL27 family.

The protein resides in the plastid. Its subcellular location is the chloroplast. This is Large ribosomal subunit protein bL27c (rpl27) from Trieres chinensis (Marine centric diatom).